The sequence spans 188 residues: ATP synthase subunit b, chloroplastic (188 aa).

Residues 35 to 57 (LINLAVVIGVLVYFGKGVLTTLL) form a helical membrane-spanning segment.

The protein belongs to the ATPase B chain family. As to quaternary structure, F-type ATPases have 2 components, F(1) - the catalytic core - and F(0) - the membrane proton channel. F(1) has five subunits: alpha(3), beta(3), gamma(1), delta(1), epsilon(1). F(0) has four main subunits: a(1), b(1), b'(1) and c(10-14). The alpha and beta chains form an alternating ring which encloses part of the gamma chain. F(1) is attached to F(0) by a central stalk formed by the gamma and epsilon chains, while a peripheral stalk is formed by the delta, b and b' chains.

The protein localises to the plastid. Its subcellular location is the chloroplast thylakoid membrane. In terms of biological role, f(1)F(0) ATP synthase produces ATP from ADP in the presence of a proton or sodium gradient. F-type ATPases consist of two structural domains, F(1) containing the extramembraneous catalytic core and F(0) containing the membrane proton channel, linked together by a central stalk and a peripheral stalk. During catalysis, ATP synthesis in the catalytic domain of F(1) is coupled via a rotary mechanism of the central stalk subunits to proton translocation. Component of the F(0) channel, it forms part of the peripheral stalk, linking F(1) to F(0). This is ATP synthase subunit b, chloroplastic from Zygnema circumcarinatum (Green alga).